A 459-amino-acid chain; its full sequence is Cysteine--tRNA ligase (459 aa).

Residue C28 participates in Zn(2+) binding. Residues 30 to 40 carry the 'HIGH' region motif; the sequence is VTIYDLCHIGH. The Zn(2+) site is built by C209, H234, and E238. The short motif at 266 to 270 is the 'KMSKS' region element; it reads KMSKS. An ATP-binding site is contributed by K269.

The protein belongs to the class-I aminoacyl-tRNA synthetase family. As to quaternary structure, monomer. Requires Zn(2+) as cofactor.

It is found in the cytoplasm. The enzyme catalyses tRNA(Cys) + L-cysteine + ATP = L-cysteinyl-tRNA(Cys) + AMP + diphosphate. The chain is Cysteine--tRNA ligase from Shewanella piezotolerans (strain WP3 / JCM 13877).